Reading from the N-terminus, the 595-residue chain is MFS-type efflux pump MFS2 (595 aa).

Asn62 carries N-linked (GlcNAc...) asparagine glycosylation. A run of 12 helical transmembrane segments spans residues 69–89 (WSIT…SSAY), 106–126 (VITL…LIWA), 136–156 (LLFF…AGSP), 166–186 (FFAG…IADM), 197–217 (GIFA…GGFL), 225–245 (WVEG…SIFL), 301–321 (PIVL…YMLF), 336–356 (PGIG…AMVI), 381–401 (LPVA…FAWT), 409–429 (IVSI…FLSL), 442–462 (ASVL…FPLF), and 478–498 (IPAF…IYGA).

The protein belongs to the major facilitator superfamily. DHA1 family. Polyamines/proton antiporter (TC 2.A.1.2.16) subfamily.

The protein localises to the cell membrane. Functionally, MFS-type efflux pump involved in the modulation susceptibility to fluconazole and voriconazole, 2 azoles with similar molecular structure. This is MFS-type efflux pump MFS2 from Trichophyton rubrum (strain ATCC MYA-4607 / CBS 118892) (Athlete's foot fungus).